Consider the following 66-residue polypeptide: MAKDAITGARTRFGNQRSHALNANRRSWKPNLQKVTVKINGDAAKTVYLTARTLRAGLKNGSIERV.

It belongs to the bacterial ribosomal protein bL28 family.

The polypeptide is Large ribosomal subunit protein bL28 (Oenococcus oeni (strain ATCC BAA-331 / PSU-1)).